The chain runs to 322 residues: MSGERAKRFPLALEDLKREPRKPEGRVAERQAAGDAARQRLTAAAAVPAAASPIVPERRAPHGGVFAAKPARAKQHAPAAPGAAKRAPQGGAKQGDRSAAPNVALSGALALTSERVRERMVERLRANGVADPRVLAAMSAVPRHMFVDPGLAAQAYEDAALPIGHQQTISKPSVVARMIELAAAGRALERVLEIGTGCGYQAAVLSRVARDVYSIERVRPLYERAKLNLRPLRVPNIRLHYGDGRVGLPAAAPFDAIVIAAAGLDVPRALLEQLAIGGRLVAPVGEQAGEQVLTLVERVAPAQWRESRLDRVFFVPLKSGVI.

The interval 1–101 (MSGERAKRFP…AKQGDRSAAP (101 aa)) is disordered. Basic and acidic residues predominate over residues 14-29 (EDLKREPRKPEGRVAE). Composition is skewed to low complexity over residues 33 to 51 (AGDA…PAAA) and 76 to 91 (HAPA…PQGG). Serine 170 is a catalytic residue.

Belongs to the methyltransferase superfamily. L-isoaspartyl/D-aspartyl protein methyltransferase family.

It is found in the cytoplasm. It catalyses the reaction [protein]-L-isoaspartate + S-adenosyl-L-methionine = [protein]-L-isoaspartate alpha-methyl ester + S-adenosyl-L-homocysteine. In terms of biological role, catalyzes the methyl esterification of L-isoaspartyl residues in peptides and proteins that result from spontaneous decomposition of normal L-aspartyl and L-asparaginyl residues. It plays a role in the repair and/or degradation of damaged proteins. The protein is Protein-L-isoaspartate O-methyltransferase of Burkholderia mallei (strain NCTC 10247).